Here is a 122-residue protein sequence, read N- to C-terminus: Large ribosomal subunit protein bL12 (122 aa).

It belongs to the bacterial ribosomal protein bL12 family. Homodimer. Part of the ribosomal stalk of the 50S ribosomal subunit. Forms a multimeric L10(L12)X complex, where L10 forms an elongated spine to which 2 to 4 L12 dimers bind in a sequential fashion. Binds GTP-bound translation factors.

Functionally, forms part of the ribosomal stalk which helps the ribosome interact with GTP-bound translation factors. Is thus essential for accurate translation. The chain is Large ribosomal subunit protein bL12 from Xylella fastidiosa (strain M23).